The following is a 193-amino-acid chain: Potassium-transporting ATPase KdpC subunit (193 aa).

Residues 11–31 (FTLVFMVLLGLVYPFVMTGIA) traverse the membrane as a helical segment.

This sequence belongs to the KdpC family. The system is composed of three essential subunits: KdpA, KdpB and KdpC.

It is found in the cell membrane. Part of the high-affinity ATP-driven potassium transport (or Kdp) system, which catalyzes the hydrolysis of ATP coupled with the electrogenic transport of potassium into the cytoplasm. This subunit acts as a catalytic chaperone that increases the ATP-binding affinity of the ATP-hydrolyzing subunit KdpB by the formation of a transient KdpB/KdpC/ATP ternary complex. The chain is Potassium-transporting ATPase KdpC subunit from Caldanaerobacter subterraneus subsp. tengcongensis (strain DSM 15242 / JCM 11007 / NBRC 100824 / MB4) (Thermoanaerobacter tengcongensis).